A 285-amino-acid chain; its full sequence is Pantothenate synthetase (285 aa).

Residue 30-37 (MGYLHEGH) participates in ATP binding. The active-site Proton donor is H37. Q61 serves as a coordination point for (R)-pantoate. Residue Q61 coordinates beta-alanine. 148–151 (GKKD) provides a ligand contact to ATP. Position 154 (Q154) interacts with (R)-pantoate. ATP contacts are provided by residues V177 and 185–188 (LSSR).

The protein belongs to the pantothenate synthetase family. As to quaternary structure, homodimer.

The protein resides in the cytoplasm. The enzyme catalyses (R)-pantoate + beta-alanine + ATP = (R)-pantothenate + AMP + diphosphate + H(+). The protein operates within cofactor biosynthesis; (R)-pantothenate biosynthesis; (R)-pantothenate from (R)-pantoate and beta-alanine: step 1/1. Functionally, catalyzes the condensation of pantoate with beta-alanine in an ATP-dependent reaction via a pantoyl-adenylate intermediate. The protein is Pantothenate synthetase of Leptospira interrogans serogroup Icterohaemorrhagiae serovar Lai (strain 56601).